The following is a 1026-amino-acid chain: Multidrug resistance protein MdtC (1026 aa).

Helical transmembrane passes span 15 to 35, 333 to 353, 360 to 380, 387 to 407, 431 to 451, 463 to 483, 528 to 548, 853 to 873, 897 to 917, 953 to 973, and 984 to 1004; these read ILIA…LPVA, EVEE…FLFL, LIPA…MYLC, LSLM…IVVL, VGFT…PLLL, FAVT…TLTP, LVGV…IAIP, LILI…LYES, LFNA…IGIV, PIMM…LSGG, and ITIV…TPVV.

It belongs to the resistance-nodulation-cell division (RND) (TC 2.A.6) family. MdtC subfamily. As to quaternary structure, part of a tripartite efflux system composed of MdtA, MdtB and MdtC. MdtC forms a heteromultimer with MdtB.

It is found in the cell inner membrane. This chain is Multidrug resistance protein MdtC, found in Salmonella agona (strain SL483).